Consider the following 88-residue polypeptide: Small ribosomal subunit protein bS16 (88 aa).

The protein belongs to the bacterial ribosomal protein bS16 family.

The protein is Small ribosomal subunit protein bS16 of Buchnera aphidicola subsp. Cinara cedri (strain Cc).